Consider the following 150-residue polypeptide: UPF0178 protein Bcep1808_1605 (150 aa).

The protein belongs to the UPF0178 family.

This is UPF0178 protein Bcep1808_1605 from Burkholderia vietnamiensis (strain G4 / LMG 22486) (Burkholderia cepacia (strain R1808)).